Reading from the N-terminus, the 171-residue chain is uncharacterized protein (171 aa).

Residues 139-171 (ARKPTKSDDEEEEVGKMGGISSSINSWVQRQKL) are disordered. Residues 158 to 171 (ISSSINSWVQRQKL) are compositionally biased toward polar residues.

This is an uncharacterized protein from Caenorhabditis elegans.